Consider the following 356-residue polypeptide: Probable farnesyl diphosphate synthase DDB_G0278823 (356 aa).

The isopentenyl diphosphate site is built by lysine 55, arginine 58, and glutamine 94. Positions 101 and 105 each coordinate Mg(2+). Arginine 110 contributes to the dimethylallyl diphosphate binding site. Arginine 111 serves as a coordination point for isopentenyl diphosphate. Lysine 203, threonine 204, glutamine 243, lysine 260, and lysine 269 together coordinate dimethylallyl diphosphate.

This sequence belongs to the FPP/GGPP synthase family. Mg(2+) is required as a cofactor.

It localises to the cytoplasm. The enzyme catalyses isopentenyl diphosphate + dimethylallyl diphosphate = (2E)-geranyl diphosphate + diphosphate. The catalysed reaction is isopentenyl diphosphate + (2E)-geranyl diphosphate = (2E,6E)-farnesyl diphosphate + diphosphate. It functions in the pathway isoprenoid biosynthesis; farnesyl diphosphate biosynthesis; farnesyl diphosphate from geranyl diphosphate and isopentenyl diphosphate: step 1/1. The protein operates within isoprenoid biosynthesis; geranyl diphosphate biosynthesis; geranyl diphosphate from dimethylallyl diphosphate and isopentenyl diphosphate: step 1/1. With respect to regulation, inhibited by aminobisphosphonate drugs (aBP), such as risedronate and alendronate. In terms of biological role, key enzyme in isoprenoid biosynthesis which catalyzes the formation of farnesyl diphosphate (FPP), a sterol precursor. The sequence is that of Probable farnesyl diphosphate synthase DDB_G0278823 from Dictyostelium discoideum (Social amoeba).